Here is a 209-residue protein sequence, read N- to C-terminus: Large ribosomal subunit protein uL3 (209 aa).

The segment at 129 to 153 (SRGPMSHGSKFHRAPGSMGAASDPS) is disordered.

The protein belongs to the universal ribosomal protein uL3 family. As to quaternary structure, part of the 50S ribosomal subunit. Forms a cluster with proteins L14 and L19.

Functionally, one of the primary rRNA binding proteins, it binds directly near the 3'-end of the 23S rRNA, where it nucleates assembly of the 50S subunit. This Clostridium perfringens (strain 13 / Type A) protein is Large ribosomal subunit protein uL3.